The chain runs to 133 residues: uncharacterized protein (133 aa).

The next 4 helical transmembrane spans lie at 5 to 27 (KLFF…FSLI), 42 to 64 (IAWN…YSLY), 77 to 99 (ALIS…TFSS), and 103 to 125 (LVWW…LLLK).

The protein resides in the cell membrane. This is an uncharacterized protein from Bacillus subtilis (strain 168).